The chain runs to 391 residues: Probable sugar efflux transporter (391 aa).

12 helical membrane passes run 16–36, 51–71, 82–102, 110–130, 138–158, 170–190, 210–230, 247–267, 277–297, 300–320, 338–358, and 361–381; these read VFVF…PVAL, VGLM…PLML, LLFL…AWNF, MGIA…VIRV, QALG…LPLG, TFGV…KLLP, PLLM…FTTY, ITTL…FLFS, FIAF…VFKN, WVIF…TIAL, IFSG…SIVI, and LGLE…LFWL.

It belongs to the major facilitator superfamily. SotB (TC 2.A.1.2) family.

The protein localises to the cell inner membrane. Functionally, involved in the efflux of sugars. The physiological role may be the reduction of the intracellular concentration of toxic sugars or sugar metabolites. This chain is Probable sugar efflux transporter, found in Helicobacter pylori (strain HPAG1).